Reading from the N-terminus, the 295-residue chain is Pyridoxal 5'-phosphate synthase subunit PdxS (295 aa).

D-ribose 5-phosphate is bound at residue aspartate 25. Lysine 82 serves as the catalytic Schiff-base intermediate with D-ribose 5-phosphate. Glycine 154 is a binding site for D-ribose 5-phosphate. Arginine 166 is a D-glyceraldehyde 3-phosphate binding site. D-ribose 5-phosphate-binding positions include glycine 215 and glycine 236–serine 237.

It belongs to the PdxS/SNZ family. In the presence of PdxT, forms a dodecamer of heterodimers.

The enzyme catalyses aldehydo-D-ribose 5-phosphate + D-glyceraldehyde 3-phosphate + L-glutamine = pyridoxal 5'-phosphate + L-glutamate + phosphate + 3 H2O + H(+). The protein operates within cofactor biosynthesis; pyridoxal 5'-phosphate biosynthesis. Functionally, catalyzes the formation of pyridoxal 5'-phosphate from ribose 5-phosphate (RBP), glyceraldehyde 3-phosphate (G3P) and ammonia. The ammonia is provided by the PdxT subunit. Can also use ribulose 5-phosphate and dihydroxyacetone phosphate as substrates, resulting from enzyme-catalyzed isomerization of RBP and G3P, respectively. The chain is Pyridoxal 5'-phosphate synthase subunit PdxS from Pasteurella multocida (strain Pm70).